A 224-amino-acid polypeptide reads, in one-letter code: Zinc finger C4H2 domain-containing protein (224 aa).

Residues 11-104 adopt a coiled-coil conformation; it reads LESIKEIRNK…RRLHDEYKPL (94 aa). Residues 189–206 form a C4H2-type zinc finger; that stretch reads CLSCHQQIHRNAPICPLC.

As to expression, expressed in fetal tissues, including in brain, intestine, lung, kidney and muscle. Isoform 1 is expressed in numerous fetal brain regions. Isoform 3 is highly expressed in numerous fetal brain regions and spinal cord.

It is found in the cytoplasm. The protein resides in the nucleus. The protein localises to the postsynaptic cell membrane. Functionally, plays a role in interneurons differentiation. Involved in neuronal development and in neuromuscular junction formation. The chain is Zinc finger C4H2 domain-containing protein (ZC4H2) from Homo sapiens (Human).